Here is a 122-residue protein sequence, read N- to C-terminus: Large ribosomal subunit protein uL18 (122 aa).

The span at 1-11 (MLKKPDRNALR) shows a compositional bias: basic and acidic residues. Residues 1–22 (MLKKPDRNALRDKRRRRVRKKI) form a disordered region. Residues 12 to 22 (DKRRRRVRKKI) show a composition bias toward basic residues.

This sequence belongs to the universal ribosomal protein uL18 family. Part of the 50S ribosomal subunit; part of the 5S rRNA/L5/L18/L25 subcomplex. Contacts the 5S and 23S rRNAs.

In terms of biological role, this is one of the proteins that bind and probably mediate the attachment of the 5S RNA into the large ribosomal subunit, where it forms part of the central protuberance. The protein is Large ribosomal subunit protein uL18 of Pelotomaculum thermopropionicum (strain DSM 13744 / JCM 10971 / SI).